Reading from the N-terminus, the 197-residue chain is Probable chorismate pyruvate-lyase (197 aa).

Residues 1-14 (MRFDAADAHWRETP) show a composition bias toward basic and acidic residues. Residues 1–25 (MRFDAADAHWRETPRPGASGAQKDW) are disordered. Substrate-binding residues include Arg73, Leu111, and Glu173.

It belongs to the UbiC family.

The protein localises to the cytoplasm. It carries out the reaction chorismate = 4-hydroxybenzoate + pyruvate. It functions in the pathway cofactor biosynthesis; ubiquinone biosynthesis. Functionally, removes the pyruvyl group from chorismate, with concomitant aromatization of the ring, to provide 4-hydroxybenzoate (4HB) for the ubiquinone pathway. The sequence is that of Probable chorismate pyruvate-lyase from Burkholderia thailandensis (strain ATCC 700388 / DSM 13276 / CCUG 48851 / CIP 106301 / E264).